Reading from the N-terminus, the 163-residue chain is Nucleotide-binding protein Dhaf_3127 (163 aa).

The protein belongs to the YajQ family.

Its function is as follows. Nucleotide-binding protein. The protein is Nucleotide-binding protein Dhaf_3127 of Desulfitobacterium hafniense (strain DSM 10664 / DCB-2).